The sequence spans 367 residues: tRNA-specific 2-thiouridylase MnmA (367 aa).

ATP-binding positions include 12 to 19 (GMSGGVDS) and M38. The tract at residues 98–100 (NPD) is interaction with target base in tRNA. C103 serves as the catalytic Nucleophile. Cysteines 103 and 200 form a disulfide. Position 128 (G128) interacts with ATP. Residues 150–152 (KDQ) form an interaction with tRNA region. C200 functions as the Cysteine persulfide intermediate in the catalytic mechanism. An interaction with tRNA region spans residues 312 to 313 (RY).

This sequence belongs to the MnmA/TRMU family. As to quaternary structure, interacts with TusE.

The protein localises to the cytoplasm. It catalyses the reaction S-sulfanyl-L-cysteinyl-[protein] + uridine(34) in tRNA + AH2 + ATP = 2-thiouridine(34) in tRNA + L-cysteinyl-[protein] + A + AMP + diphosphate + H(+). Its function is as follows. Catalyzes the 2-thiolation of uridine at the wobble position (U34) of tRNA(Lys), tRNA(Glu) and tRNA(Gln), leading to the formation of s(2)U34, the first step of tRNA-mnm(5)s(2)U34 synthesis. Sulfur is provided by IscS, via a sulfur-relay system. Binds ATP and its substrate tRNAs. In Proteus mirabilis (strain HI4320), this protein is tRNA-specific 2-thiouridylase MnmA.